A 23-amino-acid chain; its full sequence is Aurein-4.2 (23 aa).

Belongs to the frog skin active peptide (FSAP) family. Aurein subfamily. As to expression, expressed by the skin dorsal glands.

Its subcellular location is the secreted. In terms of biological role, has no antimicrobial or anticancer activity. This Ranoidea aurea (Green and golden bell frog) protein is Aurein-4.2.